The following is a 215-amino-acid chain: Cytochrome b6 (215 aa).

A helical membrane pass occupies residues 32–52 (IFYCLGGITLTCFLVQVATGF). Position 35 (C35) interacts with heme c. H86 and H100 together coordinate heme b. The next 3 membrane-spanning stretches (helical) occupy residues 90–110 (ASMMVLMMILHVFRVYLTGGF), 116–136 (LTWVTGVVLGVLTASFGVTGY), and 186–206 (LHTFVLPLLTAVFMLMHFPMI). Heme b is bound by residues H187 and H202.

The protein belongs to the cytochrome b family. PetB subfamily. As to quaternary structure, the 4 large subunits of the cytochrome b6-f complex are cytochrome b6, subunit IV (17 kDa polypeptide, PetD), cytochrome f and the Rieske protein, while the 4 small subunits are PetG, PetL, PetM and PetN. The complex functions as a dimer. The cofactor is heme b. Heme c serves as cofactor.

The protein localises to the plastid. The protein resides in the chloroplast thylakoid membrane. In terms of biological role, component of the cytochrome b6-f complex, which mediates electron transfer between photosystem II (PSII) and photosystem I (PSI), cyclic electron flow around PSI, and state transitions. The sequence is that of Cytochrome b6 from Jasminum nudiflorum (Winter jasmine).